A 541-amino-acid polypeptide reads, in one-letter code: Chaperonin GroEL 2 (541 aa).

Residues 29-32, 86-90, G413, 477-479, and D493 each bind ATP; these read TLGP, DGTTT, and NAA.

The protein belongs to the chaperonin (HSP60) family. Forms a cylinder of 14 subunits composed of two heptameric rings stacked back-to-back. Interacts with the co-chaperonin GroES.

It localises to the cytoplasm. The enzyme catalyses ATP + H2O + a folded polypeptide = ADP + phosphate + an unfolded polypeptide.. Together with its co-chaperonin GroES, plays an essential role in assisting protein folding. The GroEL-GroES system forms a nano-cage that allows encapsulation of the non-native substrate proteins and provides a physical environment optimized to promote and accelerate protein folding. This is Chaperonin GroEL 2 from Nocardioides sp. (strain ATCC BAA-499 / JS614).